We begin with the raw amino-acid sequence, 444 residues long: Transmembrane protein with metallophosphoesterase domain (444 aa).

Transmembrane regions (helical) follow at residues 7–27 (LSLGAKAALAAGTVFVSMIVS), 43–63 (LFRLQLALFVNSLMLLGSIYI), 87–107 (MVVAAFLALAHSSFFTMIFLV), 114–134 (FSLVAYTCLGAYVIMLCFLCV), and 162–182 (LALRPALAVMVTTVLSVVGLL). Positions 214, 216, 246, 277, 382, and 384 each coordinate a divalent metal cation.

This sequence belongs to the metallophosphoesterase superfamily. LOC643853 family. The cofactor is a divalent metal cation.

Its subcellular location is the membrane. This is Transmembrane protein with metallophosphoesterase domain (TMPPE) from Bos taurus (Bovine).